A 315-amino-acid polypeptide reads, in one-letter code: Transaldolase (315 aa).

Lys-125 serves as the catalytic Schiff-base intermediate with substrate.

It belongs to the transaldolase family. Type 1 subfamily. In terms of assembly, homodimer.

It localises to the cytoplasm. The enzyme catalyses D-sedoheptulose 7-phosphate + D-glyceraldehyde 3-phosphate = D-erythrose 4-phosphate + beta-D-fructose 6-phosphate. It participates in carbohydrate degradation; pentose phosphate pathway; D-glyceraldehyde 3-phosphate and beta-D-fructose 6-phosphate from D-ribose 5-phosphate and D-xylulose 5-phosphate (non-oxidative stage): step 2/3. Its function is as follows. Transaldolase is important for the balance of metabolites in the pentose-phosphate pathway. This Paracidovorax citrulli (strain AAC00-1) (Acidovorax citrulli) protein is Transaldolase.